The sequence spans 378 residues: Erythronate-4-phosphate dehydrogenase (378 aa).

Residues S45 and T66 each coordinate substrate. D146 and T175 together coordinate NAD(+). R208 is an active-site residue. Position 232 (D232) interacts with NAD(+). The active site involves E237. The Proton donor role is filled by H254. G257 provides a ligand contact to NAD(+). Substrate is bound at residue Y258.

The protein belongs to the D-isomer specific 2-hydroxyacid dehydrogenase family. PdxB subfamily. As to quaternary structure, homodimer.

The protein localises to the cytoplasm. The catalysed reaction is 4-phospho-D-erythronate + NAD(+) = (R)-3-hydroxy-2-oxo-4-phosphooxybutanoate + NADH + H(+). The protein operates within cofactor biosynthesis; pyridoxine 5'-phosphate biosynthesis; pyridoxine 5'-phosphate from D-erythrose 4-phosphate: step 2/5. Its function is as follows. Catalyzes the oxidation of erythronate-4-phosphate to 3-hydroxy-2-oxo-4-phosphonooxybutanoate. The protein is Erythronate-4-phosphate dehydrogenase of Escherichia coli O6:H1 (strain CFT073 / ATCC 700928 / UPEC).